Here is a 257-residue protein sequence, read N- to C-terminus: Homeobox protein goosecoid (257 aa).

Residues 160 to 219 (KRRHRTIFTDEQLEALENLFQETKYPDVGTREQLARKVHLREEKVEVWFKNRRAKWRRQK) constitute a DNA-binding region (homeobox). Residues 213 to 257 (AKWRRQKRSSSEESENAEKWNKTSSSKASPEKREEEGKSDLDSDS) form a disordered region. Residues 241–257 (SPEKREEEGKSDLDSDS) are compositionally biased toward basic and acidic residues.

This sequence belongs to the paired homeobox family. Bicoid subfamily.

It is found in the nucleus. Regulates chordin (CHRD). May play a role in spatial programing within discrete embryonic fields or lineage compartments during organogenesis. In concert with NKX3-2, plays a role in defining the structural components of the middle ear; required for the development of the entire tympanic ring. Probably involved in the regulatory networks that define neural crest cell fate specification and determine mesoderm cell lineages in mammals. This is Homeobox protein goosecoid (GSC) from Homo sapiens (Human).